Consider the following 349-residue polypeptide: Protein-glutamate methylesterase/protein-glutamine glutaminase (349 aa).

The region spanning 5–122 (RVLSVDDSAL…REGMLAYSEM (118 aa)) is the Response regulatory domain. Aspartate 56 is subject to 4-aspartylphosphate. Residues 152-344 (LLSSEKLIAI…QQMLAKISAG (193 aa)) enclose the CheB-type methylesterase domain. Catalysis depends on residues serine 164, histidine 190, and aspartate 286.

This sequence belongs to the CheB family. Post-translationally, phosphorylated by CheA. Phosphorylation of the N-terminal regulatory domain activates the methylesterase activity.

Its subcellular location is the cytoplasm. It carries out the reaction [protein]-L-glutamate 5-O-methyl ester + H2O = L-glutamyl-[protein] + methanol + H(+). The catalysed reaction is L-glutaminyl-[protein] + H2O = L-glutamyl-[protein] + NH4(+). Functionally, involved in chemotaxis. Part of a chemotaxis signal transduction system that modulates chemotaxis in response to various stimuli. Catalyzes the demethylation of specific methylglutamate residues introduced into the chemoreceptors (methyl-accepting chemotaxis proteins or MCP) by CheR. Also mediates the irreversible deamidation of specific glutamine residues to glutamic acid. This is Protein-glutamate methylesterase/protein-glutamine glutaminase from Salmonella typhi.